A 541-amino-acid chain; its full sequence is Glucose-6-phosphate isomerase (541 aa).

Residue Glu-346 is the Proton donor of the active site. Active-site residues include His-377 and Lys-506.

Belongs to the GPI family.

The protein resides in the cytoplasm. It carries out the reaction alpha-D-glucose 6-phosphate = beta-D-fructose 6-phosphate. It functions in the pathway carbohydrate biosynthesis; gluconeogenesis. It participates in carbohydrate degradation; glycolysis; D-glyceraldehyde 3-phosphate and glycerone phosphate from D-glucose: step 2/4. Its function is as follows. Catalyzes the reversible isomerization of glucose-6-phosphate to fructose-6-phosphate. The protein is Glucose-6-phosphate isomerase of Agrobacterium fabrum (strain C58 / ATCC 33970) (Agrobacterium tumefaciens (strain C58)).